Here is a 526-residue protein sequence, read N- to C-terminus: piRNA biogenesis factor prde-1 (526 aa).

The tract at residues 436 to 526 (EAKEEPIDKK…RRRGCEIRRK (91 aa)) is disordered. Residues 439-448 (EEPIDKKKDP) are compositionally biased toward basic and acidic residues. Residues 458-467 (GKKRRGRKPK) show a composition bias toward basic residues. Positions 468-487 (KKDDPKMELKDEVKDLKDFV) are enriched in basic and acidic residues. Over residues 489 to 498 (EESTSASSSA) the composition is skewed to low complexity.

As to expression, expressed in male and female germ cells.

The protein localises to the nucleus. Its subcellular location is the chromosome. Nuclear factor required for the production of piwi-interacting RNA (piRNA) precursors. Specifically required for piRNAs produced from loci associated with the Ruby motif. Promotes binding of the transcription factor snpc-4 at piRNA genomic clusters. Required for normal fertility. In Caenorhabditis elegans, this protein is piRNA biogenesis factor prde-1.